Here is a 392-residue protein sequence, read N- to C-terminus: Tropomodulin (392 aa).

Disordered stretches follow at residues 1 to 30 (MSQA…QLPS), 59 to 90 (DLNN…GPYK), and 118 to 138 (QKRG…PENG). Residues 16–29 (SAPSANSQQGTQLP) show a composition bias toward polar residues. 2 stretches are compositionally biased toward basic and acidic residues: residues 76–90 (RCRD…GPYK) and 122–138 (KVYD…PENG).

Belongs to the tropomodulin family. Binds to the N-terminus of actin.

It is found in the cytoplasm. The protein resides in the cytoskeleton. Acts as the pointed end capping protein which maintains the length and dynamics of the actin filament. Blocks the elongation and depolymerization of the actin filaments at the pointed end. The protein is Tropomodulin (unc-94) of Caenorhabditis elegans.